The following is a 711-amino-acid chain: Methionine--tRNA ligase (711 aa).

The 'HIGH' region motif lies at 15-25; that stretch reads PYTNGPIHIGH. Cys147, Cys150, Cys160, and Cys163 together coordinate Zn(2+). The 'KMSKS' region motif lies at 336 to 340; sequence KLSTS. Thr339 contributes to the ATP binding site. In terms of domain architecture, tRNA-binding spans 610–711; sequence DFAKMDIRIG…ADAPNGATVN (102 aa).

Belongs to the class-I aminoacyl-tRNA synthetase family. MetG type 1 subfamily. As to quaternary structure, homodimer. The cofactor is Zn(2+).

The protein localises to the cytoplasm. The enzyme catalyses tRNA(Met) + L-methionine + ATP = L-methionyl-tRNA(Met) + AMP + diphosphate. Functionally, is required not only for elongation of protein synthesis but also for the initiation of all mRNA translation through initiator tRNA(fMet) aminoacylation. This chain is Methionine--tRNA ligase, found in Flavobacterium johnsoniae (strain ATCC 17061 / DSM 2064 / JCM 8514 / BCRC 14874 / CCUG 350202 / NBRC 14942 / NCIMB 11054 / UW101) (Cytophaga johnsonae).